The chain runs to 688 residues: Thyroid hormone-induced protein B (688 aa).

The N-terminal stretch at 1–20 (MMLSHWVLLLSLGAVWLAEG) is a signal peptide. MAM domains lie at 26-169 (GSCT…GYCI), 170-330 (ECDF…SCSG), 341-500 (AGCD…SCKI), and 509-669 (GKCT…PCND). 2 N-linked (GlcNAc...) asparagine glycosylation sites follow: N32 and N135. N-linked (GlcNAc...) asparagine glycans are attached at residues N358 and N668.

The protein localises to the membrane. The protein resides in the secreted. It is found in the extracellular space. This chain is Thyroid hormone-induced protein B, found in Xenopus laevis (African clawed frog).